Reading from the N-terminus, the 134-residue chain is Profilin (134 aa).

The protein belongs to the profilin family. In terms of assembly, occurs in many kinds of cells as a complex with monomeric actin in a 1:1 ratio.

It localises to the cytoplasm. The protein localises to the cytoskeleton. Functionally, binds to actin and affects the structure of the cytoskeleton. At high concentrations, profilin prevents the polymerization of actin, whereas it enhances it at low concentrations. By binding to PIP2, it inhibits the formation of IP3 and DG. The chain is Profilin from Brassica napus (Rape).